Consider the following 372-residue polypeptide: Chaperone protein DnaJ (372 aa).

Residues 5-69 form the J domain; the sequence is DYYEVLGLSK…QKKAQYDQFG (65 aa). A CR-type zinc finger spans residues 129–211; that stretch reads GAEKEISVKK…CGGTGRKVKT (83 aa). Residues C142, C145, C159, C162, C185, C188, C199, and C202 each coordinate Zn(2+). CXXCXGXG motif repeat units lie at residues 142–149, 159–166, 185–192, and 199–206; these read CDTCDGSG, CSTCGGRG, CPDCGGTG, and CSDCGGTG.

The protein belongs to the DnaJ family. Homodimer. Zn(2+) serves as cofactor.

It localises to the cytoplasm. Participates actively in the response to hyperosmotic and heat shock by preventing the aggregation of stress-denatured proteins and by disaggregating proteins, also in an autonomous, DnaK-independent fashion. Unfolded proteins bind initially to DnaJ; upon interaction with the DnaJ-bound protein, DnaK hydrolyzes its bound ATP, resulting in the formation of a stable complex. GrpE releases ADP from DnaK; ATP binding to DnaK triggers the release of the substrate protein, thus completing the reaction cycle. Several rounds of ATP-dependent interactions between DnaJ, DnaK and GrpE are required for fully efficient folding. Also involved, together with DnaK and GrpE, in the DNA replication of plasmids through activation of initiation proteins. The sequence is that of Chaperone protein DnaJ from Macrococcus caseolyticus (strain JCSC5402) (Macrococcoides caseolyticum).